We begin with the raw amino-acid sequence, 607 residues long: CRS2-associated factor 2, chloroplastic (607 aa).

Residues Met1–Ala75 form a disordered region. A chloroplast-targeting transit peptide spans Met1–Arg79. 2 CRM domains span residues Glu228–Arg324 and Glu346–Pro442. Residues Lys482 to Asp505 are CRS2 binding. The segment at Thr550–Asp576 is disordered.

As to quaternary structure, interacts with CRS2 and RNA. Part of large ribonucleo-protein complexes that include group IIB introns, CRS2 and CAF2.

The protein resides in the plastid. It is found in the chloroplast stroma. Its function is as follows. Required for the splicing of group IIB introns in chloroplasts. Forms splicing particles with CRS2. Interacts with RNA and confers intron specificity of the splicing particles. The chain is CRS2-associated factor 2, chloroplastic from Oryza sativa subsp. japonica (Rice).